The sequence spans 572 residues: Transmembrane glycoprotein NMB (572 aa).

An N-terminal signal peptide occupies residues 1–22; that stretch reads MECLYYFLGFLLLAARLPLDAA. At 23–498 the chain is on the extracellular side; it reads KRFHDVLGNE…DPASPLRMAN (476 aa). The Cell attachment site signature appears at 64–66; sequence RGD. N-linked (GlcNAc...) asparagine glycosylation is found at asparagine 93, asparagine 134, asparagine 146, asparagine 200, asparagine 249, asparagine 275, asparagine 296, asparagine 300, asparagine 306, and asparagine 312. Residues 240-327 form the PKD domain; sequence VTMFQKNDRN…AAPGPCPPPP (88 aa). The segment at 320–362 is disordered; sequence PGPCPPPPPPPRPSKPTPSLATTLKSYDSNTPGPAGDNPLELS. Residues 321–335 show a composition bias toward pro residues; that stretch reads GPCPPPPPPPRPSKP. A compositionally biased stretch (polar residues) spans 338-351; it reads SLATTLKSYDSNTP. N-linked (GlcNAc...) asparagine glycosylation is found at asparagine 459 and asparagine 467. A helical transmembrane segment spans residues 499-519; sequence SALISVGCLAIFVTVISLLVY. Residues 520–572 lie on the Cytoplasmic side of the membrane; it reads KKHKEYNPIENSPGNVVRSKGLSVFLNRAKAVFFPGNQEKDPLLKNQEFKGVS. Serine 542 carries the phosphoserine modification.

This sequence belongs to the PMEL/NMB family. In terms of tissue distribution, widely expressed, but very low expression, if any, in the brain. Expressed in the epidermis with higher levels in melanocytes compared with keratinocytes and Langerhans cells (at protein level). Expressed in peripheral blood, but not bone marrow mononuclear cells. Expressed in tissue macrophages, including liver Kuppfer cells and lung alveolar macrophages, in podocytes and in some cells of the ciliary body of the eye (at protein level). May be overexpressed in various cancers, including melanoma and glioblastoma multiforme.

Its subcellular location is the cell membrane. It localises to the melanosome membrane. It is found in the early endosome membrane. Its function is as follows. Could be a melanogenic enzyme. The chain is Transmembrane glycoprotein NMB (GPNMB) from Homo sapiens (Human).